The sequence spans 1890 residues: DNA polymerase zeta catalytic subunit (1890 aa).

Polar residues-rich tracts occupy residues 508–533 and 549–560; these read QENLPDFGSSTKRALPSNPDSQNLRT and PDSSTSNGASEN. 2 disordered regions span residues 508–565 and 922–942; these read QENL…FRRY and GDSNIDSEKQPLRDNHNDRGA. Residues 922-940 are compositionally biased toward basic and acidic residues; the sequence is GDSNIDSEKQPLRDNHNDR. Zn(2+) contacts are provided by C1789, C1792, C1803, and C1806. The segment at 1789 to 1806 adopts a CysA-type zinc-finger fold; that stretch reads CILCGEVVQESAQLCNRC. Positions 1835, 1838, 1851, and 1856 each coordinate [4Fe-4S] cluster. The short motif at 1835 to 1856 is the CysB motif element; it reads CRHCGGGDWVVQSGVKCNSLAC.

Belongs to the DNA polymerase type-B family. Forms DNA polymerase zeta with REV7. Requires [4Fe-4S] cluster as cofactor. As to expression, expressed in roots, leaves and flowers.

Its subcellular location is the nucleus. The catalysed reaction is DNA(n) + a 2'-deoxyribonucleoside 5'-triphosphate = DNA(n+1) + diphosphate. Functionally, catalytic subunit of the error prone DNA polymerase zeta. Involved in damage-tolerance mechanisms through translesion DNA synthesis. The protein is DNA polymerase zeta catalytic subunit (REV3) of Arabidopsis thaliana (Mouse-ear cress).